A 427-amino-acid chain; its full sequence is Ribosomal protein uS12 methylthiotransferase RimO (427 aa).

The region spanning M1–V116 is the MTTase N-terminal domain. C10, C46, C79, C145, C149, and C152 together coordinate [4Fe-4S] cluster. The Radical SAM core domain maps to V131 to E360. A TRAM domain is found at E363–E426.

The protein belongs to the methylthiotransferase family. RimO subfamily. [4Fe-4S] cluster is required as a cofactor.

Its subcellular location is the cytoplasm. It catalyses the reaction L-aspartate(89)-[ribosomal protein uS12]-hydrogen + (sulfur carrier)-SH + AH2 + 2 S-adenosyl-L-methionine = 3-methylsulfanyl-L-aspartate(89)-[ribosomal protein uS12]-hydrogen + (sulfur carrier)-H + 5'-deoxyadenosine + L-methionine + A + S-adenosyl-L-homocysteine + 2 H(+). In terms of biological role, catalyzes the methylthiolation of an aspartic acid residue of ribosomal protein uS12. In Thermosipho melanesiensis (strain DSM 12029 / CIP 104789 / BI429), this protein is Ribosomal protein uS12 methylthiotransferase RimO.